The chain runs to 179 residues: Large ribosomal subunit protein uL6 (179 aa).

This sequence belongs to the universal ribosomal protein uL6 family. In terms of assembly, part of the 50S ribosomal subunit.

In terms of biological role, this protein binds to the 23S rRNA, and is important in its secondary structure. It is located near the subunit interface in the base of the L7/L12 stalk, and near the tRNA binding site of the peptidyltransferase center. The chain is Large ribosomal subunit protein uL6 from Mycobacterium sp. (strain KMS).